Reading from the N-terminus, the 532-residue chain is Undecaprenyl-phosphate glucose phosphotransferase (532 aa).

The next 5 membrane-spanning stretches (helical) occupy residues 81–101 (QVVVLSDAFCVCLAVVACIAW), 110–130 (ELSGALLLANIMAAGAFFLFP), 155–175 (VAFGEVVFCTVLVMLSWPFGV), 183–203 (WLTFVVAILFVERCVGTYILH), and 344–364 (TASVLLLLALAPLLTLVALAI).

This sequence belongs to the bacterial sugar transferase family.

It is found in the membrane. The catalysed reaction is di-trans,octa-cis-undecaprenyl phosphate + UDP-alpha-D-glucose = alpha-D-glucosyl di-trans,octa-cis-undecaprenyl diphosphate + UMP. Involved in the biosynthesis of the exopolysaccharide acetan, a water-soluble polysaccharide involved in production of bacterial cellulose (BC). The chain is Undecaprenyl-phosphate glucose phosphotransferase (aceA) from Komagataeibacter xylinus (Gluconacetobacter xylinus).